A 269-amino-acid chain; its full sequence is Growth-regulating factor 11 (269 aa).

Residues 1–11 (MAAEGEAKKDS) are compositionally biased toward basic and acidic residues. The interval 1-71 (MAAEGEAKKD…GKEDVEEGGV (71 aa)) is disordered. Gly residues predominate over residues 43–52 (GEAGGGGGGG). The segment covering 58–68 (EEEEGKEDVEE) has biased composition (acidic residues). The QLQ domain maps to 114–149 (AFTAMQLQELEQQSRVYQYMAARVPVPTHLVFPIWK). In terms of domain architecture, WRC spans 180 to 224 (EPEPGRCRRTDGKKWRCWRNAIANEKYCERHMHRGRKRPVQLVVE). Short sequence motifs (bipartite nuclear localization signal) lie at residues 185 to 195 (RCRRTDGKKWR) and 213 to 217 (RGRKR). The segment at 212 to 269 (HRGRKRPVQLVVEDDEPDSTSGSKPASGKATEGGKKTDDKSSSSKKLAVAAPAAVEST) is disordered. Residues 243 to 253 (EGGKKTDDKSS) are compositionally biased toward basic and acidic residues. Residues 255-269 (SKKLAVAAPAAVEST) show a composition bias toward low complexity.

Belongs to the GRF family.

The protein resides in the nucleus. Transcription activator that plays a regulatory role in gibberellin-induced stem elongation. The sequence is that of Growth-regulating factor 11 (GRF11) from Oryza sativa subsp. japonica (Rice).